We begin with the raw amino-acid sequence, 347 residues long: GMP reductase (347 aa).

Residue 108–131 coordinates NADP(+); sequence ADFEKTKQILDLNPALNFVCIDVA. Residues G181 and G183 each coordinate K(+). C186 serves as the catalytic Thioimidate intermediate. Position 216-239 (216-239) interacts with NADP(+); that stretch reads IVSDGGCTTPGDVAKAFGGGADFV.

Belongs to the IMPDH/GMPR family. GuaC type 1 subfamily. As to quaternary structure, homotetramer.

The enzyme catalyses IMP + NH4(+) + NADP(+) = GMP + NADPH + 2 H(+). Its function is as follows. Catalyzes the irreversible NADPH-dependent deamination of GMP to IMP. It functions in the conversion of nucleobase, nucleoside and nucleotide derivatives of G to A nucleotides, and in maintaining the intracellular balance of A and G nucleotides. The protein is GMP reductase of Shigella flexneri.